We begin with the raw amino-acid sequence, 257 residues long: Glutamate racemase (257 aa).

Substrate is bound by residues 12-13 (DS) and 44-45 (YG). C75 (proton donor/acceptor) is an active-site residue. 76 to 77 (NT) is a substrate binding site. C185 serves as the catalytic Proton donor/acceptor. A substrate-binding site is contributed by 186–187 (TH).

Belongs to the aspartate/glutamate racemases family.

The enzyme catalyses L-glutamate = D-glutamate. Its pathway is cell wall biogenesis; peptidoglycan biosynthesis. Provides the (R)-glutamate required for cell wall biosynthesis. In Clostridium botulinum (strain Loch Maree / Type A3), this protein is Glutamate racemase.